We begin with the raw amino-acid sequence, 325 residues long: Aldo-keto reductase family 1 member A1 (325 aa).

The residue at position 2 (T2) is an N-acetylthreonine. Phosphoserine is present on S4. NADP(+) is bound by residues 11–20 (GQKMPLIGLG), T21, and W22. An N-linked (Glc) (glycation) lysine glycan is attached at K23. Phosphoserine is present on S38. D45 is an NADP(+) binding site. The Proton donor role is filled by Y50. N-linked (Glc) (glycation) lysine glycosylation is found at K68 and K85. K127 carries the N6-acetyllysine; alternate modification. K127 carries the N6-succinyllysine; alternate modification. K141 carries an N-linked (Glc) (glycation) lysine glycan. Residue K145 is modified to N6-succinyllysine. N-linked (Glc) (glycation) lysine glycosylation is present at K153. NADP(+) is bound by residues S162, N163, S211, L213, S215, S216, K263, S264, I265, T266, R269, Q272, and N273. S211 is modified (phosphoserine).

Belongs to the aldo/keto reductase family. In terms of assembly, monomer. As to expression, widely expressed.

It localises to the cytoplasm. The protein localises to the cytosol. It is found in the apical cell membrane. It carries out the reaction a primary alcohol + NADP(+) = an aldehyde + NADPH + H(+). The catalysed reaction is L-gulonate + NADP(+) = aldehydo-D-glucuronate + NADPH + H(+). The enzyme catalyses L-gulono-1,4-lactone + NADP(+) = D-glucurono-3,6-lactone + NADPH + H(+). It catalyses the reaction allyl alcohol + NADP(+) = acrolein + NADPH + H(+). It carries out the reaction glycerol + NADP(+) = D-glyceraldehyde + NADPH + H(+). The catalysed reaction is glycerol + NADP(+) = L-glyceraldehyde + NADPH + H(+). The enzyme catalyses hydroxyacetone + NADP(+) = methylglyoxal + NADPH + H(+). It catalyses the reaction 3-deoxyfructose + NADP(+) = 3-deoxyglucosone + NADPH + H(+). It carries out the reaction (R)-mevalonate + NADP(+) = (R)-mevaldate + NADPH + H(+). The catalysed reaction is pyridine 3-methanol + NADP(+) = pyridine-3-carbaldehyde + NADPH + H(+). The enzyme catalyses S-nitroso-CoA + NADPH + H(+) = sulfinamide-CoA + NADP(+). It catalyses the reaction S-nitrosoglutathione + NADPH + H(+) = S-(hydroxysulfenamide)glutathione + NADP(+). Functionally, catalyzes the NADPH-dependent reduction of a wide variety of carbonyl-containing compounds to their corresponding alcohols. Displays enzymatic activity towards endogenous metabolites such as aromatic and aliphatic aldehydes, ketones, monosaccharides and bile acids. Plays an important role in ascorbic acid biosynthesis by catalyzing the reduction of D-glucuronic acid and D-glucurono-gamma-lactone. Functions as a detoxifiying enzyme by reducing a range of toxic aldehydes. Reduces methylglyoxal and 3-deoxyglucosone, which are present at elevated levels under hyperglycemic conditions and are cytotoxic. Involved also in the detoxification of lipid-derived aldehydes like acrolein. Plays a role in the activation of procarcinogens, such as polycyclic aromatic hydrocarbon trans-dihydrodiols, and in the metabolism of various xenobiotics and drugs. Also acts as an inhibitor of protein S-nitrosylation by mediating degradation of S-nitroso-coenzyme A (S-nitroso-CoA), a cofactor required to S-nitrosylate proteins. S-nitroso-CoA reductase activity is involved in reprogramming intermediary metabolism in renal proximal tubules, notably by inhibiting protein S-nitrosylation of isoform 2 of PKM (PKM2). Also acts as a S-nitroso-glutathione reductase by catalyzing the NADPH-dependent reduction of S-nitrosoglutathione. Displays no reductase activity towards retinoids. The protein is Aldo-keto reductase family 1 member A1 (Akr1a1) of Rattus norvegicus (Rat).